We begin with the raw amino-acid sequence, 74 residues long: Translation initiation factor IF-1 (74 aa).

The S1-like domain occupies 1-72 (MGKEDVIRME…TRGRIVYRKK (72 aa)).

This sequence belongs to the IF-1 family. As to quaternary structure, component of the 30S ribosomal translation pre-initiation complex which assembles on the 30S ribosome in the order IF-2 and IF-3, IF-1 and N-formylmethionyl-tRNA(fMet); mRNA recruitment can occur at any time during PIC assembly.

Its subcellular location is the cytoplasm. Functionally, one of the essential components for the initiation of protein synthesis. Stabilizes the binding of IF-2 and IF-3 on the 30S subunit to which N-formylmethionyl-tRNA(fMet) subsequently binds. Helps modulate mRNA selection, yielding the 30S pre-initiation complex (PIC). Upon addition of the 50S ribosomal subunit IF-1, IF-2 and IF-3 are released leaving the mature 70S translation initiation complex. In Thermotoga maritima (strain ATCC 43589 / DSM 3109 / JCM 10099 / NBRC 100826 / MSB8), this protein is Translation initiation factor IF-1.